The chain runs to 661 residues: MDVTEIAEQTLNTSCLSPACQQQDYAEIEKRYEAERHQQLQTRGKIPDVNIRTNTRFEQFSKDPWLDDSNKRQQIQYHQRRHNGKHHKVLIIGAGYGGLLFAVRIIQTGAFTADDILMVDTSGGFGGTWYWNRYPGLMCDVESYIYMPLLEETGYMPRAKYASGPELRVHAERIADTWKLSNRAMFGVTVKSLDWDEVGKHWSARGLVLDYEKDQSKKASLHLSADFVMLASGIFASPKIPDFTSILEYHGHMFHTSRWDYGCTGGSPENPKLCKLGDKKVGIIGTGATAIQVVPHLAQYSKELHVFQRTPSAVDKRDNHPTDPVWWNKMLQSEGPGWQKRRMENFNAFTGNEQPQPAVDMIADGWTSMPSFSIIGGSPESNATDYLHRMKAFDFPRQERIRARVRETVHNKEVAEALSPWYPGWCKRPCFHDHYLAAFNRPNVRLIDVRQSGIDHFTPKGLVADGREHEIDVFVFSTGYTTSRSSPGGRADIAITGRNGLTMEHKWQNGLATLHGVITRDFPNLFFPGPSQAGTCLNHTYTLDQLATHVAYIISKTLIKIGAADAGYSPRVVIEPTKEAEEDWAVQVLARAATHGALSQCTPGYYNRDGMASAMKSLSMEDKMKLGRMVSWGEGIGSYMDQIVNWRGQGELRGLEIHCVD.

An N-linked (GlcNAc...) asparagine glycan is attached at Asn-12. A helical membrane pass occupies residues Val-89 to Phe-111. FAD-binding positions include Thr-128–Trp-131, Asp-140–Val-141, and Tyr-146. Met-138 to Asp-140 lines the NADP(+) pocket. NADP(+) is bound by residues Thr-286–Gln-292 and Arg-309–Thr-310. Asn-382 and Asn-538 each carry an N-linked (GlcNAc...) asparagine glycan.

It belongs to the FAD-binding monooxygenase family. FAD is required as a cofactor.

It is found in the membrane. It carries out the reaction chermesin D + AH2 + O2 = asnovolin I + A + H2O. The enzyme catalyses asnovolin J + AH2 + O2 = asnovolin A + A + H2O. Its pathway is secondary metabolite biosynthesis; terpenoid biosynthesis. Its function is as follows. Chermesin D/asnovolin J monooxidase; part of the gene cluster that mediates the biosynthesis of novofumigatonin, a heavily oxygenated meroterpenoid containing a unique orthoester moiety. The first step of the pathway is the synthesis of 3,5-dimethylorsellinic acid (DMOA) by the polyketide synthase nvfA via condensation of one acetyl-CoA starter unit with 3 malonyl-CoA units and 2 methylations. DMOA is then converted to farnesyl-DMOA by the farnesyltransferase nvfB. Epoxydation by FAD-dependent monooxygenase nvfK, followed by a protonation-initiated cyclization catalyzed by the terpene cyclase nvfL leads to the production of asnavolin H. The short chain dehydrogenase nvfC then as a 3-OH dehydrogenase of asnovolin H to yield chemesin D. There are two branches to synthesize asnovolin A from chemesin D. In one branch, chemesin D undergoes Baeyer-Villiger oxidation by nvfH, methylation by nvfJ, and enoyl reduction by the nvfM D enoylreductase that reduces the double bond between C-5'and C-6', to form respectively asnovolin I, asnovolin K, and asnovolin A. In the other branch, the methylation precedes the Baeyer-Villiger oxidation and the enoyl reduction to yield asnovolin A via the asnovolin J intermediate. Asnovolin A is further converted to fumigatonoid A by the Fe(II)/2-oxoglutarate-dependent dioxygenase nvfI that catalyzes an endoperoxidation reaction. The alpha/beta hydrolase nvfD then acts as an epimerase that converts fumigatonoid A to its C-5' epimer, which then undergoes spontaneous or nvfD-catalyzed lactonization. The following step utilizes the ketoreductase nvfG to produce fumigatonoid B. The dioxygenase nvfE further converts fumigatonoid B into fumigatonoid C. Finally the Fe(II)/2-oxoglutarate-dependent dioxygenase nvfF catalyzes two rounds of oxidation to transform fumigatonoid C into the end product, novofumigatonin A. The polypeptide is Chermesin D/asnovolin J monooxidase nvfH (Aspergillus novofumigatus (strain IBT 16806)).